Here is a 98-residue protein sequence, read N- to C-terminus: Keratinocyte differentiation-associated protein (98 aa).

The signal sequence occupies residues 1–22; the sequence is MKIPILPIVALLSLLALHAAQG.

As to expression, ubiquitously expressed in stratified epithelium.

It is found in the secreted. Functionally, may act as a soluble regulator of keratinocyte differentiation. May play an important role in embryonic skin morphogenesis. This chain is Keratinocyte differentiation-associated protein, found in Rattus norvegicus (Rat).